The primary structure comprises 86 residues: Small ribosomal subunit protein bS20 (86 aa).

Residues 1 to 25 (MANIKSQQKRNRTNERARLRNKAVK) are disordered.

Belongs to the bacterial ribosomal protein bS20 family.

Binds directly to 16S ribosomal RNA. In Mycobacterium bovis (strain ATCC BAA-935 / AF2122/97), this protein is Small ribosomal subunit protein bS20.